The chain runs to 295 residues: Ribosomal RNA small subunit methyltransferase A (295 aa).

S-adenosyl-L-methionine contacts are provided by asparagine 31, leucine 33, glycine 58, glutamate 79, aspartate 104, and asparagine 129.

It belongs to the class I-like SAM-binding methyltransferase superfamily. rRNA adenine N(6)-methyltransferase family. RsmA subfamily.

It is found in the cytoplasm. The enzyme catalyses adenosine(1518)/adenosine(1519) in 16S rRNA + 4 S-adenosyl-L-methionine = N(6)-dimethyladenosine(1518)/N(6)-dimethyladenosine(1519) in 16S rRNA + 4 S-adenosyl-L-homocysteine + 4 H(+). In terms of biological role, specifically dimethylates two adjacent adenosines (A1518 and A1519) in the loop of a conserved hairpin near the 3'-end of 16S rRNA in the 30S particle. May play a critical role in biogenesis of 30S subunits. This Leuconostoc mesenteroides subsp. mesenteroides (strain ATCC 8293 / DSM 20343 / BCRC 11652 / CCM 1803 / JCM 6124 / NCDO 523 / NBRC 100496 / NCIMB 8023 / NCTC 12954 / NRRL B-1118 / 37Y) protein is Ribosomal RNA small subunit methyltransferase A.